Consider the following 189-residue polypeptide: NADH-quinone oxidoreductase subunit B (189 aa).

[4Fe-4S] cluster-binding residues include C39, C40, C104, and C135.

This sequence belongs to the complex I 20 kDa subunit family. NDH-1 is composed of 14 different subunits. Subunits NuoB, C, D, E, F, and G constitute the peripheral sector of the complex. [4Fe-4S] cluster serves as cofactor.

It is found in the cell inner membrane. It carries out the reaction a quinone + NADH + 5 H(+)(in) = a quinol + NAD(+) + 4 H(+)(out). Functionally, NDH-1 shuttles electrons from NADH, via FMN and iron-sulfur (Fe-S) centers, to quinones in the respiratory chain. The immediate electron acceptor for the enzyme in this species is believed to be a menaquinone. Couples the redox reaction to proton translocation (for every two electrons transferred, four hydrogen ions are translocated across the cytoplasmic membrane), and thus conserves the redox energy in a proton gradient. This is NADH-quinone oxidoreductase subunit B from Chlorobium luteolum (strain DSM 273 / BCRC 81028 / 2530) (Pelodictyon luteolum).